A 415-amino-acid chain; its full sequence is Low affinity tryptophan permease (415 aa).

Residues 1-11 lie on the Cytoplasmic side of the membrane; that stretch reads MTDQAEKKHSA. Residues 12 to 32 form a helical membrane-spanning segment; the sequence is FWGVMVIAGTVIGGGMFALPV. A topological domain (periplasmic) is located at residue Asp33. A helical transmembrane segment spans residues 34 to 54; sequence LAGAWFFWGAFILIIAWFSML. At 55-86 the chain is on the cytoplasmic side; sequence HSGLLLLEANLNYPVGSSFNTITKDLIGNTWN. A helical membrane pass occupies residues 87–107; that stretch reads IISGITVAFVLYILTYAYISA. Over 108 to 127 the chain is Periplasmic; it reads NGAIISETISMNLGYHANPR. A helical membrane pass occupies residues 128-148; it reads IVGICTAIFVASVLWLSSLAA. Over 149-153 the chain is Cytoplasmic; sequence SRITS. Residues 154 to 174 form a helical membrane-spanning segment; that stretch reads LFLGLKIISFVIVFGSFFFQV. Topologically, residues 175–191 are periplasmic; sequence DYSILRDATSSTAGTSY. Residues 192 to 212 traverse the membrane as a helical segment; that stretch reads FPYIFMALPVCLASFGFHGNI. Topologically, residues 213–229 are cytoplasmic; it reads PSLIICYGKRKDKLIKS. The helical transmembrane segment at 230-250 threads the bilayer; the sequence is VVFGSLLALVIYLFWLYCTMG. Residues 251–286 are Periplasmic-facing; that stretch reads NIPRESFKAIISSGGNVDSLVKSFLGTKQHGIIEFC. The chain crosses the membrane as a helical span at residues 287-307; sequence LLVFSNLAVASSFFGVTLGLF. Residues 308-326 are Cytoplasmic-facing; the sequence is DYLADLFKIDNSHGGRFKT. The helical transmembrane segment at 327-347 threads the bilayer; sequence VLLTFLPPALLYLIFPNGFIY. Gly348 is a topological domain (periplasmic). A helical transmembrane segment spans residues 349-369; that stretch reads IGGAGLCATIWAVIIPAVLAI. The Cytoplasmic portion of the chain corresponds to 370 to 387; it reads KARKKFPNQMFTVWGGNL. The helical transmembrane segment at 388 to 408 threads the bilayer; that stretch reads IPAIVILFGITVILCWFGNVF. At 409–415 the chain is on the periplasmic side; the sequence is NVLPKFG.

Belongs to the amino acid/polyamine transporter 2 family. Mtr/TnaB/TyrP permease subfamily.

The protein localises to the cell inner membrane. In terms of biological role, involved in tryptophan transport across the cytoplasmic membrane. Plays a role in transporting tryptophan which is to be used catabolically. This Escherichia coli (strain K12) protein is Low affinity tryptophan permease (tnaB).